We begin with the raw amino-acid sequence, 142 residues long: Large ribosomal subunit protein bL17 (142 aa).

Belongs to the bacterial ribosomal protein bL17 family. Part of the 50S ribosomal subunit. Contacts protein L32.

The sequence is that of Large ribosomal subunit protein bL17 from Brucella abortus (strain S19).